The primary structure comprises 1729 residues: Cullin-7 (1729 aa).

The tract at residues Asp350–His388 is disordered. Ser371 bears the Phosphoserine mark. One can recognise a CPH domain in the interval Arg392 to Phe465. Residues Ser632–Glu642 are compositionally biased toward basic and acidic residues. The segment at Ser632–Arg654 is disordered. The 180-residue stretch at Pro845–Ala1024 folds into the DOC domain. Residues Val1373–Glu1405 are disordered. Lys1607 is covalently cross-linked (Glycyl lysine isopeptide (Lys-Gly) (interchain with G-Cter in NEDD8)).

Belongs to the cullin family. Component of the 3M complex, composed of core components CUL7, CCDC8 and OBSL1. Component of the Cul7-RING(FBXW8) complex consisting of CUL7, RBX1, SKP1 and FBXW8. Within the Cul7-RING(FBXW8) complex interacts with FBXW8 and RBX1, but not with SKP1. Interacts with CUL1 (via the C-terminal domain); the interaction seems to be mediated by FBXW8; it is likely specific to FBXW8, but not other F-box proteins. Interacts (via the CPH domain) with p53/TP53; the interaction preferentially involves tetrameric and dimeric p53/TP53; this interaction recruits p53/TP53 for ubiquitination by neddylated CUL1-RBX1. The CUL7-CUL9 heterodimer seems to interact specifically with p53/TP53. Interacts with FBXW8; interaction is mutually exclusive of binding to CUL9 or p53/TP53. Interacts with CUL9; leading to inhibited CUL9 activity. Interacts with OBSL1. Interacts (as part of the 3M complex) with HDAC4 and HDAC5; it is negatively regulated by ANKRA2.

Its subcellular location is the cytoplasm. The protein localises to the cytoskeleton. It is found in the microtubule organizing center. The protein resides in the centrosome. It localises to the perinuclear region. Its subcellular location is the golgi apparatus. The protein operates within protein modification; protein ubiquitination. Core component of the 3M and Cul7-RING(FBXW8) complexes, which mediate the ubiquitination and subsequent proteasomal degradation of target proteins. Core component of the 3M complex, a complex required to regulate microtubule dynamics and genome integrity. It is unclear how the 3M complex regulates microtubules, it could act by controlling the level of a microtubule stabilizer. The Cul7-RING(FBXW8) complex alone lacks ubiquitination activity and does not promote polyubiquitination and proteasomal degradation of p53/TP53. However it mediates recruitment of p53/TP53 for ubiquitination by neddylated CUL1-RBX1. Interaction with CUL9 is required to inhibit CUL9 activity and ubiquitination of BIRC5. The Cul7-RING(FBXW8) complex also mediates ubiquitination and consequent degradation of target proteins such as GORASP1, IRS1 and MAP4K1/HPK1. Ubiquitination of GORASP1 regulates Golgi morphogenesis and dendrite patterning in brain. Mediates ubiquitination and degradation of IRS1 in a mTOR-dependent manner: the Cul7-RING(FBXW8) complex recognizes and binds IRS1 previously phosphorylated by S6 kinase (RPS6KB1 or RPS6KB2). The Cul7-RING(FBXW8) complex also mediates ubiquitination of MAP4K1/HPK1: recognizes and binds autophosphorylated MAP4K1/HPK1, leading to its degradation, thereby affecting cell proliferation and differentiation. Acts as a regulator in trophoblast cell epithelial-mesenchymal transition and placental development. While the Cul7-RING(FBXW8) and the 3M complexes are associated and involved in common processes, CUL7 and the Cul7-RING(FBXW8) complex may have additional functions. Probably plays a role in the degradation of proteins involved in endothelial proliferation and/or differentiation. The sequence is that of Cullin-7 (CUL7) from Pongo abelii (Sumatran orangutan).